The following is a 386-amino-acid chain: Na(+)/H(+) antiporter NhaA (386 aa).

The next 11 membrane-spanning stretches (helical) occupy residues 11-31 (NDAT…FLAN), 60-80 (LLLW…GLEV), 96-116 (MFPL…YAAF), 126-146 (GWAI…ALLG), 155-175 (MFLM…IALF), 180-200 (LSLI…VLNG), 218-238 (VAVL…GLFI), 260-280 (VSWL…LSGV), 293-313 (ITLG…WLAV), 326-346 (LIDI…SIFI), and 358-378 (LVTL…LVGY).

It belongs to the NhaA Na(+)/H(+) (TC 2.A.33) antiporter family.

It is found in the cell inner membrane. It carries out the reaction Na(+)(in) + 2 H(+)(out) = Na(+)(out) + 2 H(+)(in). Functionally, na(+)/H(+) antiporter that extrudes sodium in exchange for external protons. The chain is Na(+)/H(+) antiporter NhaA from Erwinia tasmaniensis (strain DSM 17950 / CFBP 7177 / CIP 109463 / NCPPB 4357 / Et1/99).